Reading from the N-terminus, the 93-residue chain is Large ribosomal subunit protein bL27 (93 aa).

Positions M1–G22 are disordered.

The protein belongs to the bacterial ribosomal protein bL27 family.

The sequence is that of Large ribosomal subunit protein bL27 from Methylobacterium sp. (strain 4-46).